A 267-amino-acid chain; its full sequence is 4-hydroxy-tetrahydrodipicolinate reductase (267 aa).

10-15 is a binding site for NAD(+); the sequence is GANGRM. Arginine 37 contributes to the NADP(+) binding site. Residues 98 to 100 and 122 to 125 contribute to the NAD(+) site; these read GTT and ARNY. The active-site Proton donor/acceptor is the histidine 155. Histidine 156 is a binding site for (S)-2,3,4,5-tetrahydrodipicolinate. Lysine 159 acts as the Proton donor in catalysis. 165 to 166 is a (S)-2,3,4,5-tetrahydrodipicolinate binding site; sequence GT.

It belongs to the DapB family.

It localises to the cytoplasm. The enzyme catalyses (S)-2,3,4,5-tetrahydrodipicolinate + NAD(+) + H2O = (2S,4S)-4-hydroxy-2,3,4,5-tetrahydrodipicolinate + NADH + H(+). It carries out the reaction (S)-2,3,4,5-tetrahydrodipicolinate + NADP(+) + H2O = (2S,4S)-4-hydroxy-2,3,4,5-tetrahydrodipicolinate + NADPH + H(+). It functions in the pathway amino-acid biosynthesis; L-lysine biosynthesis via DAP pathway; (S)-tetrahydrodipicolinate from L-aspartate: step 4/4. Catalyzes the conversion of 4-hydroxy-tetrahydrodipicolinate (HTPA) to tetrahydrodipicolinate. This is 4-hydroxy-tetrahydrodipicolinate reductase from Pseudoalteromonas translucida (strain TAC 125).